The primary structure comprises 373 residues: Type II secretion system protein L (373 aa).

At 1–214 the chain is on the cytoplasmic side; it reads MTAWRDTLGR…RRSDPMQRWN (214 aa). The helical transmembrane segment at 215-233 threads the bilayer; the sequence is LLLAVAALVLLAVAGWLLL. Residues 234 to 373 are Periplasmic-facing; the sequence is DNRRQAADDL…AKEAADAAQR (140 aa).

This sequence belongs to the GSP L family. Type II secretion system is composed of four main components: the outer membrane complex, the inner membrane complex, the cytoplasmic secretion ATPase and the periplasm-spanning pseudopilus. Forms homodimers. Interacts with XpsM/GspM. Interacts with XpsE/GspE and XpsF/GspF.

Its subcellular location is the cell inner membrane. In terms of biological role, inner membrane component of the type II secretion system required for the energy-dependent secretion of extracellular factors such as proteases and toxins from the periplasm. Plays a role in the complex assembly and recruits XpsM resulting in a stable complex in the inner membrane. Provides thus a link between the energy-providing XpsE protein in the cytoplasm and the rest of the T2SS machinery. This Xanthomonas campestris pv. campestris (strain ATCC 33913 / DSM 3586 / NCPPB 528 / LMG 568 / P 25) protein is Type II secretion system protein L (pefL).